We begin with the raw amino-acid sequence, 290 residues long: Ankyrin repeat and SOCS box protein 9 (290 aa).

An N-acetylmethionine modification is found at M1. A compositionally biased stretch (basic and acidic residues) spans 1 to 11; sequence MDGEQRGRSDR. The segment at 1 to 20 is disordered; it reads MDGEQRGRSDRPGGSPHLPF. ANK repeat units follow at residues 31–60, 64–93, 97–126, 129–158, 162–191, and 194–223; these read SDWS…PVNI, DHVS…QVNG, DWRT…TPHP, ELAS…NIDY, HLGT…SVNQ, and GLDS…NAQA. Positions 236–290 constitute an SOCS box domain; that stretch reads PLESPLIQIFLQNEGPQSLRQLCRLRIRKCFGIRQHHKISELLLPEDLKRFLLHL.

The protein belongs to the ankyrin SOCS box (ASB) family. Substrate-recognition component of the ECS(ASB9) complex, composed of ASB9, CUL5, ELOB, ELOC and RNF7/RBX2.

Its subcellular location is the mitochondrion. The protein operates within protein modification; protein ubiquitination. In terms of biological role, substrate-recognition component of a cullin-5-RING E3 ubiquitin-protein ligase complex (ECS complex, also named CRL5 complex), which mediates the ubiquitination and subsequent proteasomal degradation of target proteins. The ECS(ASB9) complex catalyzes ubiquitination of creatine kinases CKB and CKMT1A. This Mus musculus (Mouse) protein is Ankyrin repeat and SOCS box protein 9.